Reading from the N-terminus, the 218-residue chain is Monomethylamine corrinoid protein 1 (218 aa).

Positions 1-91 (MANQEIFDKL…ELEKTKVEGE (91 aa)) constitute a B12-binding N-terminal domain. Residues 94 to 218 (TGLAITFVAE…AAKVALNIMK (125 aa)) enclose the B12-binding domain. Residue H107 participates in methylcob(III)alamin binding.

It belongs to the methylamine corrinoid protein family. Can form a complex with MtmB.

Its pathway is one-carbon metabolism; methanogenesis from methylamine. Functionally, acts as a methyl group carrier between MtmB and MtbA. The polypeptide is Monomethylamine corrinoid protein 1 (mtmC1) (Methanosarcina mazei (strain ATCC BAA-159 / DSM 3647 / Goe1 / Go1 / JCM 11833 / OCM 88) (Methanosarcina frisia)).